A 234-amino-acid chain; its full sequence is STARD3 N-terminal-like protein (234 aa).

Position 1 is an N-acetylmethionine (Met1). Over 1-53 the chain is Cytoplasmic; that stretch reads MNHLPEDMENALTGSQSSHASLRNIHSINPTQLMARIESYEGREKKGISDVRR. Residues Ser15, Ser21, and Ser27 each carry the phosphoserine modification. The MENTAL domain maps to 48-218; it reads ISDVRRTFCL…YSPPESEAGS (171 aa). The helical transmembrane segment at 54 to 74 threads the bilayer; sequence TFCLFVTFDLLFVTLLWIIEL. Residues 75 to 97 are Extracellular-facing; sequence NVNGGIENTLEKEVMQYDYYSSY. A helical transmembrane segment spans residues 98 to 118; sequence FDIFLLAVFRFKVLILAYAVC. At 119-122 the chain is on the cytoplasmic side; it reads RLRH. A helical transmembrane segment spans residues 123 to 143; the sequence is WWAIALTTAVTSAFLLAKVIL. Residues 144–150 are Extracellular-facing; sequence SKLFSQG. A helical membrane pass occupies residues 151-171; the sequence is AFGYVLPIISFILAWIETWFL. The Cytoplasmic portion of the chain corresponds to 172–234; sequence DFKVLPQEAE…QDSEKPLLEL (63 aa). Position 193 is a phosphoserine (Ser193). Residues 200–234 form a disordered region; sequence PGGLSDGQFYSPPESEAGSEEAEEKQDSEKPLLEL. An FFAT motif is present at residues 208–213; that stretch reads FYSPPE. The segment covering 224–234 has biased composition (basic and acidic residues); the sequence is KQDSEKPLLEL.

It belongs to the STARD3 family. As to quaternary structure, homodimer. Interacts (via the MENTAL domain) with STARD3NL. Interacts (via FFAT motif) with VAPA. Interacts (via FFAT motif) with VAPB. Interacts (via FFAT motif) with MOSPD2 (via MSP domain).

It is found in the late endosome membrane. Functionally, tethering protein that creates contact site between the endoplasmic reticulum and late endosomes: localizes to late endosome membranes and contacts the endoplasmic reticulum via interaction with VAPA and VAPB. The polypeptide is STARD3 N-terminal-like protein (Homo sapiens (Human)).